The chain runs to 380 residues: Queuine tRNA-ribosyltransferase (380 aa).

Catalysis depends on Asp-96, which acts as the Proton acceptor. Residues 96 to 100 (DSGGF), Asp-150, Gln-193, and Gly-220 contribute to the substrate site. Residues 251–257 (GVGAPDS) are RNA binding. Asp-270 serves as the catalytic Nucleophile. An RNA binding; important for wobble base 34 recognition region spans residues 275–279 (TRIAR). Zn(2+) contacts are provided by Cys-308, Cys-310, Cys-313, and His-339.

Belongs to the queuine tRNA-ribosyltransferase family. Homodimer. Within each dimer, one monomer is responsible for RNA recognition and catalysis, while the other monomer binds to the replacement base PreQ1. Zn(2+) is required as a cofactor.

The enzyme catalyses 7-aminomethyl-7-carbaguanine + guanosine(34) in tRNA = 7-aminomethyl-7-carbaguanosine(34) in tRNA + guanine. The protein operates within tRNA modification; tRNA-queuosine biosynthesis. Catalyzes the base-exchange of a guanine (G) residue with the queuine precursor 7-aminomethyl-7-deazaguanine (PreQ1) at position 34 (anticodon wobble position) in tRNAs with GU(N) anticodons (tRNA-Asp, -Asn, -His and -Tyr). Catalysis occurs through a double-displacement mechanism. The nucleophile active site attacks the C1' of nucleotide 34 to detach the guanine base from the RNA, forming a covalent enzyme-RNA intermediate. The proton acceptor active site deprotonates the incoming PreQ1, allowing a nucleophilic attack on the C1' of the ribose to form the product. After dissociation, two additional enzymatic reactions on the tRNA convert PreQ1 to queuine (Q), resulting in the hypermodified nucleoside queuosine (7-(((4,5-cis-dihydroxy-2-cyclopenten-1-yl)amino)methyl)-7-deazaguanosine). In Streptococcus pyogenes serotype M1, this protein is Queuine tRNA-ribosyltransferase.